The following is a 40-amino-acid chain: Photosystem II reaction center protein Psb30 (40 aa).

The chain crosses the membrane as a helical span at residues 12–32 (VIFQLTSVALIIIAGPAVIFV).

The protein belongs to the Psb30/Ycf12 family. PSII is composed of 1 copy each of membrane proteins PsbA, PsbB, PsbC, PsbD, PsbE, PsbF, PsbH, PsbI, PsbJ, PsbK, PsbL, PsbM, PsbT, PsbX, PsbY, PsbZ, Psb30/Ycf12, peripheral proteins PsbO, CyanoQ (PsbQ), PsbU, PsbV and a large number of cofactors. It forms dimeric complexes.

The protein localises to the cellular thylakoid membrane. Functionally, a core subunit of photosystem II (PSII), probably helps stabilize the reaction center. The sequence is that of Photosystem II reaction center protein Psb30 from Nostoc sp. (strain PCC 7120 / SAG 25.82 / UTEX 2576).